Reading from the N-terminus, the 180-residue chain is NADH-quinone oxidoreductase subunit I (180 aa).

2 4Fe-4S ferredoxin-type domains span residues 48–80 (IVLTRDPDGDERCVACNLCAVACPVGCISLQKS) and 90–119 (EFFRINFSRCIFCGLCEEACPTTAIQLTPD). Positions 60, 63, 66, 70, 99, 102, 105, and 109 each coordinate [4Fe-4S] cluster. Residues 161-174 (KPKGDAENEAKPID) are compositionally biased toward basic and acidic residues. The disordered stretch occupies residues 161–180 (KPKGDAENEAKPIDVKSLLP).

This sequence belongs to the complex I 23 kDa subunit family. NDH-1 is composed of 13 different subunits. Subunits NuoA, H, J, K, L, M, N constitute the membrane sector of the complex. Requires [4Fe-4S] cluster as cofactor.

The protein resides in the cell inner membrane. It carries out the reaction a quinone + NADH + 5 H(+)(in) = a quinol + NAD(+) + 4 H(+)(out). Its function is as follows. NDH-1 shuttles electrons from NADH, via FMN and iron-sulfur (Fe-S) centers, to quinones in the respiratory chain. The immediate electron acceptor for the enzyme in this species is believed to be ubiquinone. Couples the redox reaction to proton translocation (for every two electrons transferred, four hydrogen ions are translocated across the cytoplasmic membrane), and thus conserves the redox energy in a proton gradient. This is NADH-quinone oxidoreductase subunit I from Shewanella oneidensis (strain ATCC 700550 / JCM 31522 / CIP 106686 / LMG 19005 / NCIMB 14063 / MR-1).